We begin with the raw amino-acid sequence, 270 residues long: MSLKKSPFFELRSGSVDTLLFIVKTADLDALRAELVKRFEATPEFFADDVVAIDVRRLADHERVPLDDIRGMLNDVRMRAIGVVAQPEQHAWAASAGLPLLEARDRRAPSSKAADEAPVQQAEPAAPAAGQAALFEQAGPTLADAGAPPESPAPAVAAQSATLVVDRPLRSGQQIYAKGDLVVLGPVSYGAEVIAEGNIHIYAPLRGRALAGVHGNHDARIFCTCLEPELISIAGIYRTTENPLPADVLGKSVQIRLEQEKLMIEPLRLT.

Residues aspartate 105–alanine 129 form a disordered region. A compositionally biased stretch (low complexity) spans glutamate 116–alanine 129.

This sequence belongs to the MinC family. As to quaternary structure, interacts with MinD and FtsZ.

In terms of biological role, cell division inhibitor that blocks the formation of polar Z ring septums. Rapidly oscillates between the poles of the cell to destabilize FtsZ filaments that have formed before they mature into polar Z rings. Prevents FtsZ polymerization. The polypeptide is Probable septum site-determining protein MinC (Burkholderia pseudomallei (strain 1106a)).